The following is a 929-amino-acid chain: ATP-dependent DNA helicase PIF1 (929 aa).

A mitochondrion-targeting transit peptide spans 1-52 (MLRRLLQPAYNVALSGTSASTLPRKSASVGLVRTALMPVDYNAGALFCAMRF). Residues 55–89 (GTEKERKREPKRGSKRRSKATTTLSTPTDAQTSVT) form a disordered region. Positions 56–66 (TEKERKREPKR) are enriched in basic and acidic residues. Residues 74–89 (ATTTLSTPTDAQTSVT) show a composition bias toward polar residues. 302 to 309 (GSAGTGKT) contributes to the ATP binding site. A DNA-binding region spans residues 776–796 (HLLYVAMSRVRNPEQLSMSSF). The tract at residues 902 to 929 (HERRQKKMAVEGAKQTDTTKASSGESLE) is disordered. The segment covering 916-929 (QTDTTKASSGESLE) has biased composition (polar residues).

Belongs to the helicase family. PIF1 subfamily. Monomer. The cofactor is Mg(2+).

It localises to the mitochondrion. It catalyses the reaction Couples ATP hydrolysis with the unwinding of duplex DNA at the replication fork by translocating in the 5'-3' direction. This creates two antiparallel DNA single strands (ssDNA). The leading ssDNA polymer is the template for DNA polymerase III holoenzyme which synthesizes a continuous strand.. The catalysed reaction is ATP + H2O = ADP + phosphate + H(+). In terms of biological role, DNA-dependent ATPase and probable 5'-3' DNA helicase required for the maintenance of mitochondrial (kinetoplast) genome stability. Essential for replication of kinetoplast minicircles. Involved in the segregation of minicircle progeny. The polypeptide is ATP-dependent DNA helicase PIF1 (Trypanosoma brucei brucei (strain 927/4 GUTat10.1)).